A 248-amino-acid polypeptide reads, in one-letter code: 2,3-bisphosphoglycerate-dependent phosphoglycerate mutase (248 aa).

Residues 8–15 (RHGESVWN), 21–22 (TG), Arg60, 87–90 (ERHY), Lys98, and 114–115 (RR) each bind substrate. His9 serves as the catalytic Tele-phosphohistidine intermediate. Glu87 serves as the catalytic Proton donor/acceptor. Residues 116 to 135 (SYDTPPPPMEVSDPRHPSHD) are disordered. A substrate-binding site is contributed by 183–184 (GN).

Belongs to the phosphoglycerate mutase family. BPG-dependent PGAM subfamily. Homodimer.

The enzyme catalyses (2R)-2-phosphoglycerate = (2R)-3-phosphoglycerate. It participates in carbohydrate degradation; glycolysis; pyruvate from D-glyceraldehyde 3-phosphate: step 3/5. Functionally, catalyzes the interconversion of 2-phosphoglycerate and 3-phosphoglycerate. This chain is 2,3-bisphosphoglycerate-dependent phosphoglycerate mutase, found in Bdellovibrio bacteriovorus (strain ATCC 15356 / DSM 50701 / NCIMB 9529 / HD100).